Here is a 415-residue protein sequence, read N- to C-terminus: Esterase FrsA (415 aa).

It belongs to the FrsA family.

The enzyme catalyses a carboxylic ester + H2O = an alcohol + a carboxylate + H(+). Functionally, catalyzes the hydrolysis of esters. The chain is Esterase FrsA from Vibrio parahaemolyticus serotype O3:K6 (strain RIMD 2210633).